Consider the following 103-residue polypeptide: Cell division protein FtsB (103 aa).

At 1-3 (MGK) the chain is on the cytoplasmic side. A helical transmembrane segment spans residues 4-21 (LTLLLLAILVWLQYSLWF). The Periplasmic segment spans residues 22–103 (GKNGIHDYTR…RAQSAGQNNR (82 aa)). Residues 31–71 (RVNDDVAAQQATNAKLKARNDQLFAEIDDLNGGQEALEERA) are a coiled coil.

Belongs to the FtsB family. As to quaternary structure, part of a complex composed of FtsB, FtsL and FtsQ.

The protein resides in the cell inner membrane. Functionally, essential cell division protein. May link together the upstream cell division proteins, which are predominantly cytoplasmic, with the downstream cell division proteins, which are predominantly periplasmic. The polypeptide is Cell division protein FtsB (Shigella boydii serotype 18 (strain CDC 3083-94 / BS512)).